The chain runs to 208 residues: uncharacterized protein (208 aa).

Residues 1–16 (MKFLLIACLAVPAILA) form the signal peptide. Asn-79 carries N-linked (GlcNAc...) asparagine glycosylation.

This is an uncharacterized protein from Caenorhabditis elegans.